Here is a 240-residue protein sequence, read N- to C-terminus: uncharacterized protein (240 aa).

2 helical membrane-spanning segments follow: residues 16-36 (AVFF…YFIP) and 67-87 (FITA…VIAM).

The protein localises to the cell membrane. This is an uncharacterized protein from Bacillus subtilis (strain 168).